Consider the following 107-residue polypeptide: Glutaredoxin 4 (107 aa).

Residues 4 to 106 enclose the Glutaredoxin domain; sequence IEKIERQIKD…KIISNAVLNS (103 aa). Lys21 is a binding site for glutathione. A [2Fe-2S] cluster-binding site is contributed by Cys29. Glutathione is bound by residues Arg58, Phe70, and 83–84; that span reads CS.

The protein belongs to the glutaredoxin family. Monothiol subfamily. Homodimer.

Its subcellular location is the cytoplasm. Functionally, monothiol glutaredoxin involved in the biogenesis of iron-sulfur clusters. In Buchnera aphidicola subsp. Schizaphis graminum (strain Sg), this protein is Glutaredoxin 4 (grxD).